A 273-amino-acid chain; its full sequence is Tyrosinase (273 aa).

Cu cation contacts are provided by histidine 37, histidine 53, histidine 62, histidine 189, histidine 193, and histidine 215.

The protein belongs to the tyrosinase family. It depends on Cu(2+) as a cofactor.

The enzyme catalyses 2 L-dopa + O2 = 2 L-dopaquinone + 2 H2O. The catalysed reaction is L-tyrosine + O2 = L-dopaquinone + H2O. Functionally, this is a copper-containing oxidase that functions in the formation of pigments such as melanins and other polyphenolic compounds. This Streptomyces lincolnensis protein is Tyrosinase (melC2).